The chain runs to 60 residues: Large ribosomal subunit protein uL30 (60 aa).

This sequence belongs to the universal ribosomal protein uL30 family. Part of the 50S ribosomal subunit.

This is Large ribosomal subunit protein uL30 from Desulfotalea psychrophila (strain LSv54 / DSM 12343).